The following is a 1434-amino-acid chain: Probable deoxyribonuclease RhsA (1434 aa).

Residues 14–42 (AMHAGNRPNPPDDRPQPCRGKPPTSPGKT) form a disordered region. Transmembrane regions (helical) follow at residues 48–68 (FLGALAGAVAGALVAAAVAAA) and 70–90 (VFLVGVTGGLAVAAVGALAVF). YD repeat units follow at residues 486–521 (YDAAHRLTRWHDNDQTWARYEYDAQGRCVYTTCADG), 592–628 (DDTGRVSTFTDASGHQWQYDYDAAQRLCGVTDPLGRE), and 847–876 (YDARGLLLRETAPDDTLHYRYDAVGRLTEV).

It belongs to the RHS/WapA nuclease family.

The protein resides in the membrane. In terms of biological role, toxic component of a toxin-immunity protein module, which functions as a cellular contact-dependent growth inhibition (CDI) system. This protein may be a nuclease that is specifically inhibited by its cognate immunity protein RhsAI. Upon expression of the C-terminus (residues 1284-1434) in E.coli growth is inhibited, cells elongate, nucleoids condense and plasmid DNA is degraded; these effects are blocked specifically by cognate immunity protein RshIA. Cell contact is necessary for growth inhibition. The sequence is that of Probable deoxyribonuclease RhsA (rhsA) from Dickeya dadantii (strain 3937) (Erwinia chrysanthemi (strain 3937)).